The following is a 451-amino-acid chain: Trigger factor (451 aa).

Positions 165-250 (DDKLTIDFEG…LHQIQVREAL (86 aa)) constitute a PPIase FKBP-type domain.

This sequence belongs to the FKBP-type PPIase family. Tig subfamily.

Its subcellular location is the cytoplasm. It catalyses the reaction [protein]-peptidylproline (omega=180) = [protein]-peptidylproline (omega=0). In terms of biological role, involved in protein export. Acts as a chaperone by maintaining the newly synthesized protein in an open conformation. Functions as a peptidyl-prolyl cis-trans isomerase. This is Trigger factor from Helicobacter pylori (strain P12).